The primary structure comprises 291 residues: Exosome complex exonuclease RRP42 (291 aa).

Ala2 is modified (N-acetylalanine). Lys116 is modified (N6-acetyllysine).

The protein belongs to the RNase PH family. In terms of assembly, component of the RNA exosome core complex (Exo-9), composed of EXOSC1, EXOSC2, EXOSC3, EXOSC4, EXOSC5, EXOSC6, EXOSC7, EXOSC8 and EXOSC9; within the complex interacts with EXOSC2 and EXOSC4. The catalytically inactive RNA exosome core complex (Exo-9) associates with the catalytic subunit EXOSC10/RRP6. Exo-9 may associate with DIS3 to form the nucleolar exosome complex, or DIS3L to form the cytoplasmic exosome complex. Exo-9 is formed by a hexameric base ring consisting of the heterodimers EXOSC4-EXOSC9, EXOSC5-EXOSC8 and EXOSC6-EXOSC7, and a cap ring consisting of EXOSC1, EXOSC2 and EXOSC3. The RNA exosome complex associates with cofactors C1D/RRP47, MPHOSPH6/MPP6 and MTREX/MTR4. Interacts with ZC3HAV1. Interacts with DIS3; the interaction is direct.

It localises to the nucleus. The protein localises to the nucleolus. The protein resides in the cytoplasm. In terms of biological role, non-catalytic component of the RNA exosome complex which has 3'-&gt;5' exoribonuclease activity and participates in a multitude of cellular RNA processing and degradation events. In the nucleus, the RNA exosome complex is involved in proper maturation of stable RNA species such as rRNA, snRNA and snoRNA, in the elimination of RNA processing by-products and non-coding 'pervasive' transcripts, such as antisense RNA species and promoter-upstream transcripts (PROMPTs), and of mRNAs with processing defects, thereby limiting or excluding their export to the cytoplasm. The RNA exosome may be involved in Ig class switch recombination (CSR) and/or Ig variable region somatic hypermutation (SHM) by targeting AICDA deamination activity to transcribed dsDNA substrates. In the cytoplasm, the RNA exosome complex is involved in general mRNA turnover and specifically degrades inherently unstable mRNAs containing AU-rich elements (AREs) within their 3' untranslated regions, and in RNA surveillance pathways, preventing translation of aberrant mRNAs. It seems to be involved in degradation of histone mRNA. The catalytic inactive RNA exosome core complex of 9 subunits (Exo-9) is proposed to play a pivotal role in the binding and presentation of RNA for ribonucleolysis, and to serve as a scaffold for the association with catalytic subunits and accessory proteins or complexes. The protein is Exosome complex exonuclease RRP42 (Exosc7) of Mus musculus (Mouse).